Reading from the N-terminus, the 612-residue chain is BTB/POZ domain-containing protein 9 (612 aa).

The region spanning 36-104 (GDVTFVVEKK…IYTGRATLTD (69 aa)) is the BTB domain. The 99-residue stretch at 142–240 (VCMTFDVASL…SLTELLNVVR (99 aa)) folds into the BACK domain. A disordered region spans residues 559-612 (QQSNQKEDSSEEPGTGDPSTPNQQLDPHAPRAPSASSLPPSPGPNSRSPNQQNQ). The span at 589-612 (RAPSASSLPPSPGPNSRSPNQQNQ) shows a compositional bias: low complexity.

Expressed in the brain (at protein level).

This is BTB/POZ domain-containing protein 9 (Btbd9) from Mus musculus (Mouse).